Reading from the N-terminus, the 411-residue chain is MVTVIDPQLAGVSGNMMVGALIDLGAHPERTAEVMEDAASHFGGADVSVSEVKRAGLRATYVDVRADESLSVGYLEFLRLLEGISHPALDDEMLSMARAVFHTIAQAEASVHGVKLDEVHFHEVGAADAVADVMGAVFAYFDLNLHRDEVYTLPVAVGGGLVRGAHGLTPVPAPATTEILRGFPVTGGPSGVELATPTGSALLVNMVREHRRFFPPMEIQATGYGAGSMDPEFPNILRIVRGSGQVPHDTVTLLETNVDHLSGEVLGNIFERLLEAGALDVTLTPVIMKKNRPGQLIRVICRENEYERILEHLFSETGTLGVRIFPQVHRGVLERRIMEAEVDIKGRRTARFKVGLMGSRVVNARIEYEDARRISLETGIPLRDVIEMSEKQFRDLKFKADQENDGSGGLK.

This sequence belongs to the LarC family.

This Methanothermobacter thermautotrophicus (strain ATCC 29096 / DSM 1053 / JCM 10044 / NBRC 100330 / Delta H) (Methanobacterium thermoautotrophicum) protein is Putative nickel insertion protein.